The following is a 179-amino-acid chain: Enhancer of split m8 protein (179 aa).

The 56-residue stretch at 10–65 (YQKVKKPMLERQRRARMNKCLDNLKTLVAELRGDDGILRMDKAEMLESAVIFMRQQ) folds into the bHLH domain. The Orange domain maps to 83-116 (FKNGYMNAVNEVSRVMASTPGMSVDLGKSVMTHL). The disordered stretch occupies residues 146–179 (DKAPLSPASSGYHSDCDSPAPSPQPMQQPLWRPW). A WRPW motif motif is present at residues 176–179 (WRPW).

Homodimer. Heterodimers with dpn. Transcription repression requires formation of a complex with a corepressor protein (Groucho).

It is found in the nucleus. In terms of biological role, participates in the control of cell fate choice by uncommitted neuroectodermal cells in the embryo. Transcriptional repressor. Binds DNA on N-box motifs: 5'-CACNAG-3'. Part of the Notch signaling pathway. The polypeptide is Enhancer of split m8 protein (Drosophila melanogaster (Fruit fly)).